Consider the following 246-residue polypeptide: Probable aquaporin AqpM (246 aa).

Topologically, residues 1-12 are cytoplasmic; that stretch reads MTMTLAKRFTAE. Residues 13–33 form a helical membrane-spanning segment; sequence VVGTFILVFFGPGAAVITLMI. The Extracellular portion of the chain corresponds to 34-56; that stretch reads ANGADKPNEFNIGIGALGGLGDW. The chain crosses the membrane as a helical span at residues 57-77; that stretch reads FAIGMAFALAIAAVIYSLGRI. Residues 78–104 lie on the Cytoplasmic side of the membrane; that stretch reads SGAHINPAVTIALWSIGRFPGREVVPY. Residues 83–85 carry the NPA 1 motif; it reads NPA. The helical transmembrane segment at 105–125 threads the bilayer; the sequence is IVAQFIGAALGSLLFLACVGP. The Extracellular segment spans residues 126–146; that stretch reads AAATVGGLGATAPFPGIGYGQ. The helical transmembrane segment at 147 to 167 threads the bilayer; the sequence is AILTEAIGTFLLMLVIMGVAV. Residues 168-173 are Cytoplasmic-facing; the sequence is DERAPP. A helical transmembrane segment spans residues 174 to 194; that stretch reads GFAGLVIGLTVGGIITTIGNI. At 195–217 the chain is on the extracellular side; sequence TGSSLNPARTFGPYLGDSLMGIN. The short motif at 200-202 is the NPA 2 element; the sequence is NPA. Residues 218-238 form a helical membrane-spanning segment; the sequence is LWQYFPIYVIGPIVGAVAAAW. Residues 239–246 lie on the Cytoplasmic side of the membrane; sequence LYNYLAKE.

It belongs to the MIP/aquaporin (TC 1.A.8) family.

It is found in the cell membrane. Channel that permits osmotically driven movement of water in both directions. This Archaeoglobus fulgidus (strain ATCC 49558 / DSM 4304 / JCM 9628 / NBRC 100126 / VC-16) protein is Probable aquaporin AqpM (aqpM).